Here is a 435-residue protein sequence, read N- to C-terminus: MKTTYVNATIVTMNEQNEVIENGYIIVENDQIIDVKSGEFASDFEVDEVIDMKGKWVLPGLVNTHTHVVMSLLRGIGDDMLLQPWLETRIWPLESQFTPQIAVASTELGLLEMVKSGTTSFSDMFNPIGVDQDAIMETVSRSGMRAAVSRTLFSFGTKEDEKKAIEEAERYVKRYYNESGMLTTMVAPHSPYTCSTELLEECARIAVENRTMVHIHLSETEREVRDIEAQYGKRPVEYAASCGLFKRPTVIAHGVVLNDSERAFLAEHDVRVAHNPNSNLKLGSGIANVKAMLEAGIKVGIATDSVASNNNLDMFEEMRIATLLQKGIHQDATALPVETALTLATKGAAEVIGMKQTGSLEVGKCADFITIDPSNKPHLQPADEVLSHLVYAASGKDISDVIINGKRVVWNGECKTLDEERIIFEASRYKRGLQR.

Histidine 65 and histidine 67 together coordinate Zn(2+). Glutamate 94, arginine 150, and histidine 189 together coordinate substrate. Residue histidine 216 participates in Zn(2+) binding. Substrate-binding residues include glutamate 219 and aspartate 304. Aspartate 304 lines the Zn(2+) pocket.

The protein belongs to the metallo-dependent hydrolases superfamily. MTA/SAH deaminase family. It depends on Zn(2+) as a cofactor.

It carries out the reaction S-adenosyl-L-homocysteine + H2O + H(+) = S-inosyl-L-homocysteine + NH4(+). It catalyses the reaction S-methyl-5'-thioadenosine + H2O + H(+) = S-methyl-5'-thioinosine + NH4(+). Functionally, catalyzes the deamination of 5-methylthioadenosine and S-adenosyl-L-homocysteine into 5-methylthioinosine and S-inosyl-L-homocysteine, respectively. Is also able to deaminate adenosine. The chain is 5-methylthioadenosine/S-adenosylhomocysteine deaminase from Bacillus cereus (strain ZK / E33L).